The primary structure comprises 333 residues: Fructose-1,6-bisphosphatase class 1 1 (333 aa).

4 residues coordinate Mg(2+): E81, D100, L102, and D103. Substrate contacts are provided by residues 103–106 (DGSS) and N191. E263 contacts Mg(2+).

The protein belongs to the FBPase class 1 family. Homotetramer. Mg(2+) serves as cofactor.

The protein resides in the cytoplasm. It catalyses the reaction beta-D-fructose 1,6-bisphosphate + H2O = beta-D-fructose 6-phosphate + phosphate. The protein operates within carbohydrate biosynthesis; Calvin cycle. The sequence is that of Fructose-1,6-bisphosphatase class 1 1 from Cereibacter sphaeroides (strain ATCC 17025 / ATH 2.4.3) (Rhodobacter sphaeroides).